Here is a 364-residue protein sequence, read N- to C-terminus: Chorismate synthase (364 aa).

NADP(+) is bound at residue Arg-47. FMN-binding positions include 124 to 126 (RGS), 240 to 241 (NA), Gly-284, 299 to 303 (KPTPS), and Arg-326.

The protein belongs to the chorismate synthase family. It depends on FMNH2 as a cofactor.

The catalysed reaction is 5-O-(1-carboxyvinyl)-3-phosphoshikimate = chorismate + phosphate. It participates in metabolic intermediate biosynthesis; chorismate biosynthesis; chorismate from D-erythrose 4-phosphate and phosphoenolpyruvate: step 7/7. Its function is as follows. Catalyzes the anti-1,4-elimination of the C-3 phosphate and the C-6 proR hydrogen from 5-enolpyruvylshikimate-3-phosphate (EPSP) to yield chorismate, which is the branch point compound that serves as the starting substrate for the three terminal pathways of aromatic amino acid biosynthesis. This reaction introduces a second double bond into the aromatic ring system. The protein is Chorismate synthase of Methanobrevibacter smithii (strain ATCC 35061 / DSM 861 / OCM 144 / PS).